The following is a 398-amino-acid chain: Phosphoglycerate kinase (398 aa).

Substrate is bound by residues 21-23, Arg-36, 59-62, Arg-119, and Arg-157; these read DFN and HLGR. ATP is bound by residues Lys-208, Gly-296, Glu-327, and 354-357; that span reads GGDS.

Belongs to the phosphoglycerate kinase family. Monomer.

Its subcellular location is the cytoplasm. It catalyses the reaction (2R)-3-phosphoglycerate + ATP = (2R)-3-phospho-glyceroyl phosphate + ADP. The protein operates within carbohydrate degradation; glycolysis; pyruvate from D-glyceraldehyde 3-phosphate: step 2/5. This Streptococcus uberis (strain ATCC BAA-854 / 0140J) protein is Phosphoglycerate kinase.